We begin with the raw amino-acid sequence, 237 residues long: 7-carboxy-7-deazaguanine synthase (237 aa).

Substrate-binding positions include 15–17 (LSG) and Arg-30. The 213-residue stretch at 21 to 233 (STGIPTIFVR…IQTHKYIWGD (213 aa)) folds into the Radical SAM core domain. Residues Cys-34, Cys-38, and Cys-48 each coordinate [4Fe-4S] cluster. Residue Thr-50 coordinates Mg(2+). Thr-84 lines the substrate pocket. Gly-86 serves as a coordination point for S-adenosyl-L-methionine.

It belongs to the radical SAM superfamily. 7-carboxy-7-deazaguanine synthase family. Homodimer. [4Fe-4S] cluster is required as a cofactor. Requires S-adenosyl-L-methionine as cofactor. The cofactor is Mg(2+).

The catalysed reaction is 6-carboxy-5,6,7,8-tetrahydropterin + H(+) = 7-carboxy-7-deazaguanine + NH4(+). It functions in the pathway purine metabolism; 7-cyano-7-deazaguanine biosynthesis. Functionally, catalyzes the complex heterocyclic radical-mediated conversion of 6-carboxy-5,6,7,8-tetrahydropterin (CPH4) to 7-carboxy-7-deazaguanine (CDG), a step common to the biosynthetic pathways of all 7-deazapurine-containing compounds. This chain is 7-carboxy-7-deazaguanine synthase, found in Leptospira interrogans serogroup Icterohaemorrhagiae serovar Lai (strain 56601).